The sequence spans 400 residues: GTPase Obg (400 aa).

Residues 1-159 (MKFVDEVQIR…RTLKLELLLL (159 aa)) form the Obg domain. An OBG-type G domain is found at 160-333 (ADVGMLGLPN…VCYDILDLLD (174 aa)). Residues 166–173 (GLPNAGKS), 191–195 (FTTLV), 213–216 (DIPG), 283–286 (NKMD), and 314–316 (SAI) contribute to the GTP site. Residues Ser173 and Thr193 each coordinate Mg(2+).

It belongs to the TRAFAC class OBG-HflX-like GTPase superfamily. OBG GTPase family. As to quaternary structure, monomer. Mg(2+) is required as a cofactor.

Its subcellular location is the cytoplasm. Its function is as follows. An essential GTPase which binds GTP, GDP and possibly (p)ppGpp with moderate affinity, with high nucleotide exchange rates and a fairly low GTP hydrolysis rate. Plays a role in control of the cell cycle, stress response, ribosome biogenesis and in those bacteria that undergo differentiation, in morphogenesis control. The protein is GTPase Obg of Aeromonas salmonicida (strain A449).